Reading from the N-terminus, the 263-residue chain is Lens fiber major intrinsic protein (263 aa).

Over 1–9 the chain is Cytoplasmic; the sequence is MWELRSASF. The helical transmembrane segment at 10–29 threads the bilayer; sequence WRAIFAEFFATLFYVFFGLG. Residues 30–41 lie on the Extracellular side of the membrane; the sequence is SSLRWAPGPLHV. The helical transmembrane segment at 42–59 threads the bilayer; sequence LQVAMAFGLALATLVQSV. Residues 60-61 are Cytoplasmic-facing; it reads GH. An intramembrane region (discontinuously helical) is located at residues 62 to 77; it reads ISGAHVNPAVTFAFLV. An NPA 1 motif is present at residues 68–70; the sequence is NPA. Residues 78 to 82 lie on the Cytoplasmic side of the membrane; it reads GSQMS. The helical transmembrane segment at 83-106 threads the bilayer; sequence LLRAFCYMAAQLLGAVAGAAVLYS. Topologically, residues 107–127 are extracellular; the sequence is VTPPAVRGNLALNTLHPAVSV. A helical transmembrane segment spans residues 128–148; the sequence is GQATTVEIFLTLQFVLCIFAT. Topologically, residues 149–156 are cytoplasmic; the sequence is YDERRNGQ. Residues 157-175 form a helical membrane-spanning segment; it reads LGSVALAVGFSLALGHLFG. Residues 176-178 are Extracellular-facing; it reads MYY. Positions 179–193 form an intramembrane region, discontinuously helical; it reads TGAGMNPARSFAPAI. Residues 184-186 carry the NPA 2 motif; the sequence is NPA. Over 194–200 the chain is Extracellular; the sequence is LTGNFTN. A helical membrane pass occupies residues 201-222; the sequence is HWVYWVGPIIGGGLGSLLYDFL. The Cytoplasmic segment spans residues 223–263; the sequence is LFPRLKSISERLSVLKGAKPDVSNGQPEVTGEPVELNTQAL. An interaction with CALM region spans residues 227 to 237; it reads LKSISERLSVL. Residues Ser235 and Ser245 each carry the phosphoserine modification. Deamidated asparagine; by deterioration occurs at positions 246 and 259.

Belongs to the MIP/aquaporin (TC 1.A.8) family. In terms of assembly, homotetramer; each monomer provides an independent water pore. Two homotetramers on opposing membranes can dimerize, forming a cell-cell junction. Interacts with CALM; the calcium-calmodulin/CALM complex interacts with the cytoplasmic domains of two aquaporins, leading to channel closure. Interacts with BFSP1 (via C-terminus); prevents calcium-dependent inhibition of the water channel activity. In terms of processing, subject to partial proteolytic cleavage in the eye lens core. Partial proteolysis promotes interactions between tetramers from adjoining membranes. Post-translationally, fatty acylated at Met-1 and Lys-238. The acyl modifications, in decreasing order of ion abundance, are: oleoyl (C18:1) &gt; palmitoyl (C16:0) &gt; stearoyl (C18:0) &gt; eicosenoyl (C20:1) &gt; dihomo-gamma-linolenoyl (C20:3) &gt; palmitoleoyl (C16:1) &gt; eicosadienoyl (C20:2). As to expression, expressed in the cortex and nucleus of the retina lens (at protein level). Major component of lens fiber gap junctions.

The protein resides in the cell membrane. Its subcellular location is the cell junction. It carries out the reaction H2O(in) = H2O(out). With respect to regulation, the water channel activity is inhibited by calcium through calmodulin/CALM. Aquaporins form homotetrameric transmembrane channels, with each monomer independently mediating water transport across the plasma membrane along its osmotic gradient. Specifically expressed in lens fiber cells, this aquaporin is crucial for maintaining lens water homeostasis and transparency. Beyond water permeability, it also acts as a cell-to-cell adhesion molecule, forming thin junctions between lens fiber cells that are essential for maintaining the ordered structure and transparency of the lens. This is Lens fiber major intrinsic protein from Homo sapiens (Human).